The sequence spans 457 residues: Acetylcholine receptor subunit alpha (457 aa).

The signal sequence occupies residues 1-20 (MEPWPLLLLFSLCSAGLVLG). The Extracellular portion of the chain corresponds to 21–232 (SEHETRLVAK…YHFVMQRLPL (212 aa)). 2 cysteine pairs are disulfide-bonded: C148–C162 and C212–C213. N161 is a glycosylation site (N-linked (GlcNAc...) asparagine). The helical transmembrane segment at 233–253 (YFIVNVIIPCLLFSFLTGLVF) threads the bilayer. Residues 254–264 (YLPTDSGEKMT) lie on the Cytoplasmic side of the membrane. A helical membrane pass occupies residues 265–285 (LSISVLLSLTVFLLVIVELIP). The Extracellular segment spans residues 286–296 (STSSAVPLIGK). The chain crosses the membrane as a helical span at residues 297 to 317 (YMLFTMVFVIASIIITVIVIN). Topologically, residues 318–427 (THHRSPSTHV…EWKYVAMVMD (110 aa)) are cytoplasmic. Residues 428 to 448 (HILLGVFMLVCIIGTLAVFAG) form a helical membrane-spanning segment. Residues 449-457 (RLIELNQQG) lie on the Extracellular side of the membrane.

The protein belongs to the ligand-gated ion channel (TC 1.A.9) family. Acetylcholine receptor (TC 1.A.9.1) subfamily. Alpha-1/CHRNA1 sub-subfamily. One of the alpha chains that assemble within the acetylcholine receptor, a pentamer of two alpha chains, a beta, a delta, and a gamma (in immature muscle) or epsilon (in mature muscle) chains. The muscle heteropentamer composed of alpha-1, beta-1, delta, epsilon subunits interacts with the alpha-conotoxin ImII. In terms of assembly, is able to interact with other subunits of the acetylcholine receptor but is not assembled into functional acetylcholine-gated cation-selective channels. As to expression, isoform 1 is only expressed in skeletal muscle. Isoform 2 is constitutively expressed in skeletal muscle, brain, heart, kidney, liver, lung and thymus.

It is found in the postsynaptic cell membrane. The protein resides in the cell membrane. The catalysed reaction is K(+)(in) = K(+)(out). The enzyme catalyses Na(+)(in) = Na(+)(out). Its function is as follows. Upon acetylcholine binding, the AChR responds by an extensive change in conformation that affects all subunits and leads to opening of an ion-conducting channel across the plasma membrane. Functionally, non functional acetylcholine receptor alpha subunit which is not integrated into functional acetylcholine-gated cation-selective channels. The sequence is that of Acetylcholine receptor subunit alpha from Homo sapiens (Human).